The following is a 472-amino-acid chain: MTVETFKPKQTTTLDIPVKTLEAASTNAVTTGNRIGFVSLGCPKNLVDSERILTQLRIDGYEVTNSYANADLVIVNTCGFIDAAVEESLDAVREALEENGKVIVTGCLGAKENQIREVHPDVLEITGPHSYEAVLKHVHKYVPKPEHNPFTSLIPQTGVKLTPKHYAYLKISEGCDNRCTFCIIPSLRGDLDSRPAGSILDEAKRLVESGVQEILVVSQDTSAYGKDKGGRTDFWNGMPVKQDITSLARQLGKMGAWVRLHYIYPYPWVDDLIPLMAEGLILPYLDIPMQHASPRILKMMKRPGRVDRQLEAIQRWREICPDLVIRSTFIVGFPGETEEDFQILLDFLKEARLDRVGCFKYSEVDGAVANTIAELISEDVKEDRYHRFMEVQAEISAERLARFVGRTLDILIDDVDEEGAIGRSFADAPEIDGMVFINGETELEPGMLVRARITHSDEHDLWAEVVDADTQD.

The region spanning 33 to 143 (NRIGFVSLGC…VLKHVHKYVP (111 aa)) is the MTTase N-terminal domain. [4Fe-4S] cluster-binding residues include Cys-42, Cys-78, Cys-107, Cys-175, Cys-179, and Cys-182. The 238-residue stretch at 161–398 (LTPKHYAYLK…MEVQAEISAE (238 aa)) folds into the Radical SAM core domain. A TRAM domain is found at 401–467 (ARFVGRTLDI…EHDLWAEVVD (67 aa)).

It belongs to the methylthiotransferase family. RimO subfamily. [4Fe-4S] cluster is required as a cofactor.

It localises to the cytoplasm. The enzyme catalyses L-aspartate(89)-[ribosomal protein uS12]-hydrogen + (sulfur carrier)-SH + AH2 + 2 S-adenosyl-L-methionine = 3-methylsulfanyl-L-aspartate(89)-[ribosomal protein uS12]-hydrogen + (sulfur carrier)-H + 5'-deoxyadenosine + L-methionine + A + S-adenosyl-L-homocysteine + 2 H(+). Catalyzes the methylthiolation of an aspartic acid residue of ribosomal protein uS12. The polypeptide is Ribosomal protein uS12 methylthiotransferase RimO (Shewanella baltica (strain OS155 / ATCC BAA-1091)).